The following is a 509-amino-acid chain: Taxoid 14-beta-hydroxylase (509 aa).

A run of 3 helical transmembrane segments spans residues 20-40 (AILFIVLSAVAGIVLPLLLFL), 186-206 (SVVALVGDLVFDISACLFFNI), and 218-238 (LLEIIAVGVLAVPVDLPGFAY). Cys443 is a binding site for heme.

It belongs to the cytochrome P450 family.

It localises to the microsome membrane. It carries out the reaction 10beta-hydroxytaxa-4(20),11-dien-5alpha-yl acetate + NADPH + O2 + H(+) = 10beta,14beta-dihydroxytaxa-4(20),11-dien-5alpha-yl acetate + NADP(+) + H2O. It functions in the pathway alkaloid biosynthesis; taxol biosynthesis. Catalyzes the conversion of 5-alpha-acetoxy-10beta-ol to 5-alpha-acetoxy-10beta,14beta-dihydroxy taxadiene. Also acts on taxa-4(20),11-dien-5-alpha-yl acetate. This chain is Taxoid 14-beta-hydroxylase, found in Taxus cuspidata (Japanese yew).